The chain runs to 371 residues: Ferrochelatase (371 aa).

Fe cation contacts are provided by His-218 and Glu-299.

The protein belongs to the ferrochelatase family.

The protein resides in the cytoplasm. It catalyses the reaction heme b + 2 H(+) = protoporphyrin IX + Fe(2+). It functions in the pathway porphyrin-containing compound metabolism; protoheme biosynthesis; protoheme from protoporphyrin-IX: step 1/1. Catalyzes the ferrous insertion into protoporphyrin IX. The polypeptide is Ferrochelatase (Cupriavidus metallidurans (strain ATCC 43123 / DSM 2839 / NBRC 102507 / CH34) (Ralstonia metallidurans)).